The chain runs to 116 residues: Co-chaperonin GroES (116 aa).

Belongs to the GroES chaperonin family. In terms of assembly, heptamer of 7 subunits arranged in a ring. Interacts with the chaperonin GroEL.

The protein localises to the cytoplasm. In terms of biological role, together with the chaperonin GroEL, plays an essential role in assisting protein folding. The GroEL-GroES system forms a nano-cage that allows encapsulation of the non-native substrate proteins and provides a physical environment optimized to promote and accelerate protein folding. GroES binds to the apical surface of the GroEL ring, thereby capping the opening of the GroEL channel. In Mycoplasma pneumoniae (strain ATCC 29342 / M129 / Subtype 1) (Mycoplasmoides pneumoniae), this protein is Co-chaperonin GroES.